Reading from the N-terminus, the 233-residue chain is Large ribosomal subunit protein uL1 (233 aa).

It belongs to the universal ribosomal protein uL1 family. As to quaternary structure, part of the 50S ribosomal subunit.

Functionally, binds directly to 23S rRNA. The L1 stalk is quite mobile in the ribosome, and is involved in E site tRNA release. Protein L1 is also a translational repressor protein, it controls the translation of the L11 operon by binding to its mRNA. The sequence is that of Large ribosomal subunit protein uL1 from Geobacillus sp. (strain WCH70).